Reading from the N-terminus, the 323-residue chain is Lipoyl synthase (323 aa).

Residues Cys65, Cys70, Cys76, Cys91, Cys95, Cys98, and Ser304 each coordinate [4Fe-4S] cluster. A Radical SAM core domain is found at 77 to 293 (FNNGTATFMI…KKEALSIGFT (217 aa)).

Belongs to the radical SAM superfamily. Lipoyl synthase family. [4Fe-4S] cluster is required as a cofactor.

The protein localises to the cytoplasm. It catalyses the reaction [[Fe-S] cluster scaffold protein carrying a second [4Fe-4S](2+) cluster] + N(6)-octanoyl-L-lysyl-[protein] + 2 oxidized [2Fe-2S]-[ferredoxin] + 2 S-adenosyl-L-methionine + 4 H(+) = [[Fe-S] cluster scaffold protein] + N(6)-[(R)-dihydrolipoyl]-L-lysyl-[protein] + 4 Fe(3+) + 2 hydrogen sulfide + 2 5'-deoxyadenosine + 2 L-methionine + 2 reduced [2Fe-2S]-[ferredoxin]. The protein operates within protein modification; protein lipoylation via endogenous pathway; protein N(6)-(lipoyl)lysine from octanoyl-[acyl-carrier-protein]: step 2/2. Functionally, catalyzes the radical-mediated insertion of two sulfur atoms into the C-6 and C-8 positions of the octanoyl moiety bound to the lipoyl domains of lipoate-dependent enzymes, thereby converting the octanoylated domains into lipoylated derivatives. The protein is Lipoyl synthase of Buchnera aphidicola subsp. Acyrthosiphon pisum (strain 5A).